The chain runs to 303 residues: 3-methyl-2-oxobutanoate hydroxymethyltransferase (303 aa).

Residues Met-1–Gln-10 are compositionally biased toward polar residues. The segment at Met-1–Ser-41 is disordered. Asp-84 and Asp-123 together coordinate Mg(2+). 3-methyl-2-oxobutanoate-binding positions include Asp-84–Ser-85, Asp-123, and Lys-153. Glu-155 provides a ligand contact to Mg(2+). The active-site Proton acceptor is Glu-221.

This sequence belongs to the PanB family. Homodecamer; pentamer of dimers. Requires Mg(2+) as cofactor.

Its subcellular location is the cytoplasm. It catalyses the reaction 3-methyl-2-oxobutanoate + (6R)-5,10-methylene-5,6,7,8-tetrahydrofolate + H2O = 2-dehydropantoate + (6S)-5,6,7,8-tetrahydrofolate. The protein operates within cofactor biosynthesis; (R)-pantothenate biosynthesis; (R)-pantoate from 3-methyl-2-oxobutanoate: step 1/2. Its function is as follows. Catalyzes the reversible reaction in which hydroxymethyl group from 5,10-methylenetetrahydrofolate is transferred onto alpha-ketoisovalerate to form ketopantoate. In Frankia alni (strain DSM 45986 / CECT 9034 / ACN14a), this protein is 3-methyl-2-oxobutanoate hydroxymethyltransferase.